The sequence spans 383 residues: L-lactate dehydrogenase (383 aa).

An FMN hydroxy acid dehydrogenase domain is found at 1 to 380 (MIISSTFDYR…THESLASTDA (380 aa)). Tyr24 contributes to the substrate binding site. FMN is bound by residues Ser106 and Gln127. Tyr129 is a binding site for substrate. Thr155 serves as a coordination point for FMN. Arg164 contacts substrate. Position 251 (Lys251) interacts with FMN. The Proton acceptor role is filled by His275. Position 278 (Arg278) interacts with substrate. 306–330 (DSGVRSGLDVVRMIAQGADAVMIGR) contributes to the FMN binding site.

Belongs to the FMN-dependent alpha-hydroxy acid dehydrogenase family. The cofactor is FMN.

The protein resides in the cell inner membrane. It catalyses the reaction (S)-lactate + A = pyruvate + AH2. Catalyzes the conversion of L-lactate to pyruvate. Is coupled to the respiratory chain. The protein is L-lactate dehydrogenase of Bartonella quintana (strain Toulouse) (Rochalimaea quintana).